We begin with the raw amino-acid sequence, 291 residues long: Putative carboxymethylenebutenolidase (291 aa).

The N-terminal stretch at 1–40 (MTAFDADLRSLAAQTTLSRRTVIATSLATGFALAVQPVAA) is a signal peptide. Active-site residues include Cys170, Asp227, and His259.

It belongs to the dienelactone hydrolase family.

It carries out the reaction 2-(5-oxo-2,5-dihydrofuran-2-ylidene)acetate + H2O = 4-oxohex-2-enedioate + H(+). The polypeptide is Putative carboxymethylenebutenolidase (Methylorubrum extorquens (strain ATCC 14718 / DSM 1338 / JCM 2805 / NCIMB 9133 / AM1) (Methylobacterium extorquens)).